The sequence spans 366 residues: tRNA/tmRNA (uracil-C(5))-methyltransferase (366 aa).

S-adenosyl-L-methionine contacts are provided by Q190, Y218, N223, E239, and D299. C324 serves as the catalytic Nucleophile. The active-site Proton acceptor is the E358.

Belongs to the class I-like SAM-binding methyltransferase superfamily. RNA M5U methyltransferase family. TrmA subfamily.

It carries out the reaction uridine(54) in tRNA + S-adenosyl-L-methionine = 5-methyluridine(54) in tRNA + S-adenosyl-L-homocysteine + H(+). It catalyses the reaction uridine(341) in tmRNA + S-adenosyl-L-methionine = 5-methyluridine(341) in tmRNA + S-adenosyl-L-homocysteine + H(+). Its function is as follows. Dual-specificity methyltransferase that catalyzes the formation of 5-methyluridine at position 54 (m5U54) in all tRNAs, and that of position 341 (m5U341) in tmRNA (transfer-mRNA). The protein is tRNA/tmRNA (uracil-C(5))-methyltransferase of Escherichia coli O17:K52:H18 (strain UMN026 / ExPEC).